The sequence spans 538 residues: Bifunctional purine biosynthesis protein PurH (538 aa).

The 151-residue stretch at 8-158 (IPAPDLVPVR…KNHAYVAIVT (151 aa)) folds into the MGS-like domain.

Belongs to the PurH family.

The catalysed reaction is (6R)-10-formyltetrahydrofolate + 5-amino-1-(5-phospho-beta-D-ribosyl)imidazole-4-carboxamide = 5-formamido-1-(5-phospho-D-ribosyl)imidazole-4-carboxamide + (6S)-5,6,7,8-tetrahydrofolate. The enzyme catalyses IMP + H2O = 5-formamido-1-(5-phospho-D-ribosyl)imidazole-4-carboxamide. It participates in purine metabolism; IMP biosynthesis via de novo pathway; 5-formamido-1-(5-phospho-D-ribosyl)imidazole-4-carboxamide from 5-amino-1-(5-phospho-D-ribosyl)imidazole-4-carboxamide (10-formyl THF route): step 1/1. Its pathway is purine metabolism; IMP biosynthesis via de novo pathway; IMP from 5-formamido-1-(5-phospho-D-ribosyl)imidazole-4-carboxamide: step 1/1. This is Bifunctional purine biosynthesis protein PurH from Mesorhizobium japonicum (strain LMG 29417 / CECT 9101 / MAFF 303099) (Mesorhizobium loti (strain MAFF 303099)).